The primary structure comprises 299 residues: ATP phosphoribosyltransferase (299 aa).

Belongs to the ATP phosphoribosyltransferase family. Long subfamily. Mg(2+) serves as cofactor.

It is found in the cytoplasm. It carries out the reaction 1-(5-phospho-beta-D-ribosyl)-ATP + diphosphate = 5-phospho-alpha-D-ribose 1-diphosphate + ATP. Its pathway is amino-acid biosynthesis; L-histidine biosynthesis; L-histidine from 5-phospho-alpha-D-ribose 1-diphosphate: step 1/9. Feedback inhibited by histidine. Functionally, catalyzes the condensation of ATP and 5-phosphoribose 1-diphosphate to form N'-(5'-phosphoribosyl)-ATP (PR-ATP). Has a crucial role in the pathway because the rate of histidine biosynthesis seems to be controlled primarily by regulation of HisG enzymatic activity. In Rhodopirellula baltica (strain DSM 10527 / NCIMB 13988 / SH1), this protein is ATP phosphoribosyltransferase.